A 532-amino-acid polypeptide reads, in one-letter code: Cytokinin dehydrogenase 1 (532 aa).

The first 17 residues, 1–17, serve as a signal peptide directing secretion; sequence MAAIYLLIAALIASSHA. N52 and N63 each carry an N-linked (GlcNAc...) asparagine glycan. One can recognise an FAD-binding PCMH-type domain in the interval 65-244; that stretch reads TAALPAAVLF…TRARVAVEPA (180 aa). F100, G102, R103, and G104 together coordinate FAD. H105 is modified (pros-8alpha-FAD histidine). FAD contacts are provided by S106 and Q110. An N-linked (GlcNAc...) asparagine glycan is attached at N133. FAD is bound by residues D168, T173, S179, V183, and I234. N-linked (GlcNAc...) asparagine glycans are attached at residues N321 and N432. FAD is bound by residues Y490, S525, and Q528.

It belongs to the oxygen-dependent FAD-linked oxidoreductase family. Monomer. FAD serves as cofactor.

It is found in the secreted. It localises to the extracellular space. The catalysed reaction is N(6)-dimethylallyladenine + A + H2O = 3-methyl-2-butenal + adenine + AH2. Its function is as follows. Catalyzes the oxidation of cytokinins, a family of N(6)-substituted adenine derivatives that are plant hormones, where the substituent is an isopentenyl group. This Oryza sativa subsp. japonica (Rice) protein is Cytokinin dehydrogenase 1 (CKX1).